Reading from the N-terminus, the 112-residue chain is Protein lin-52 homolog (112 aa).

This sequence belongs to the lin-52 family. Component of the DREAM complex.

The polypeptide is Protein lin-52 homolog (lin52) (Danio rerio (Zebrafish)).